The primary structure comprises 1372 residues: MAYSYTEKKRIRKSFAELPTVMDIPYLLSIQVDSYEQFLQEHKKPKARENTGLQAAYSSIFPIESHSGNAELQFVEYYLGTPEFDERECILRGSTFAAPMRVKIRLIIKDKDSKDKDSKAAIKDIREQSVYMGEMPLMTANGTFIINGTERVIVSQLHRSPGVFFDHDKGKSHSSGKVLYNARIIPYRGSWLDFEFDAKDLVFARIDRRRKLLASIILRALGLSTSEILDLFFDKVRVYKGEEQFEIDLVADRLRGEMAQFDIVTPAGDVVVEQGKRINARRIRQLEEAGMTKISIPDEYLYERILAEDIIVNDEVIARANTLIDHELLVKLSAFEASESIKEFSILFTNDIDQGSYIADTLRADSTSSREEALIEIYKVMRPGEPPTVETAEKLFDSMFFNADRYDLSNVGRMKFNRRLGLDFVDTDDADIQRERSVLTNADIVNVLKELIEIRNGRGEVDDIDHLGNRRIRSVGEMAENQFRVGLVRVERAVKERLSSAESDNLSPQDLINSKPVAAAVKEFFGSSQLSQFMDQNNPLSEVTHKRRVSALGPGGLTRERAGFEVRDVHDTHYGRVCPIETPEGPNIGLINSLATFAKTNSFGFLETPYRRVVDGKVTDVIEYLSAIEEVGTVIAQADSPVTADGALSDEMVSVRSYGEFVRMPPEKVTHMDVSPSQVVSVAAGLIPFLEHDDANRALMGSNMQRQAVPTLRADKPLVGTGMERHVARDSGVCVIAKRGGVIEDVDASRVVVRVNEDEMIAGEAGIDIYNLVKYTRSNQNTCINQRIIVNQGDAIAVGDILADGPSTDLGELALGQNIRIAFMPWNGYNFEDSILLSEKVVKEDRFTTIHIQELTCVARDTKLGTEEITADIPNVGEAALSSLDEAGIVYIGAEVDAGDILVGKVTPKGETQLTPEEKLLRAIFGEKAADVKDTSLRVPTSSKGTVIDVQVFTRDGVEKDARARAIEKSQLDSYRKDLKEELRIFEEAARGRIGNLLDGQKVSGGSGLKAGTVMALADMKDMSLETLLDIQPVEEEISERLTQIAEYLVDKQKDIDVKFAEKKRKLTAGDDLQHGVQKIVKVYLAVKRRIQPGDKMAGRHGNKGVVSRIMPVEDMPYDENGNTVDIVLNPLGVPSRMNIGQVLETHLGMAAKGLGEKIDGMLKSQAAIKDLRDFLDKIYNQVGGEQVDLDSLSDDDIMALADNLRAGVPMGTAVFDGARESQVKDLLELAGMDRDGQQTLYDGRTGQKFDRKVTVGYMYMLKLNHLVDDKMHARSTGSYSLVTQQPLGGKAQFGGQRFGEMEVWALEAYGATYTLQEMLTVKSDDVEGRTRMYKNIVDGEQYMDPGMPESFNVLTKEIKSLGINIELKQSN.

It belongs to the RNA polymerase beta chain family. In terms of assembly, the RNAP catalytic core consists of 2 alpha, 1 beta, 1 beta' and 1 omega subunit. When a sigma factor is associated with the core the holoenzyme is formed, which can initiate transcription.

It catalyses the reaction RNA(n) + a ribonucleoside 5'-triphosphate = RNA(n+1) + diphosphate. DNA-dependent RNA polymerase catalyzes the transcription of DNA into RNA using the four ribonucleoside triphosphates as substrates. This Psychrobacter cryohalolentis (strain ATCC BAA-1226 / DSM 17306 / VKM B-2378 / K5) protein is DNA-directed RNA polymerase subunit beta.